An 848-amino-acid polypeptide reads, in one-letter code: DNA mismatch repair protein MutS (848 aa).

ATP is bound at residue 610–617; sequence GPNMGGKS.

Belongs to the DNA mismatch repair MutS family.

Functionally, this protein is involved in the repair of mismatches in DNA. It is possible that it carries out the mismatch recognition step. This protein has a weak ATPase activity. In Francisella philomiragia subsp. philomiragia (strain ATCC 25017 / CCUG 19701 / FSC 153 / O#319-036), this protein is DNA mismatch repair protein MutS.